The following is a 591-amino-acid chain: Parathyroid hormone/parathyroid hormone-related peptide receptor (591 aa).

Positions 1–26 are cleaved as a signal peptide; the sequence is MGTARIAPSLALLLCCPVLSSAYALV. Residues 27–188 lie on the Extracellular side of the membrane; that stretch reads DADDVFTKEE…REREVFDRLG (162 aa). Cystine bridges form between cysteine 48-cysteine 117, cysteine 108-cysteine 148, and cysteine 131-cysteine 170. The interval 67-104 is disordered; the sequence is KGWTPASTSGKPRKEKAPGKFYPESKENKDVPTGSRRR. The span at 81 to 96 shows a compositional bias: basic and acidic residues; that stretch reads EKAPGKFYPESKENKD. N-linked (GlcNAc...) asparagine glycosylation is found at asparagine 151, asparagine 161, asparagine 166, and asparagine 176. Residues 189 to 212 form a helical membrane-spanning segment; the sequence is MIYTVGYSMSLASLTVAVLILAYF. The Cytoplasmic segment spans residues 213-219; that stretch reads RRLHCTR. Residues 220–239 traverse the membrane as a helical segment; the sequence is NYIHMHMFLSFMLRAASIFV. The Extracellular segment spans residues 240-282; it reads KDAVLYSGFTLDEAERLTEEELHIIAQVPPPPAAAAVGYAGCR. A helical transmembrane segment spans residues 283-306; sequence VAVTFFLYFLATNYYWILVEGLYL. The Cytoplasmic segment spans residues 307–320; that stretch reads HSLIFMAFFSEKKY. A helical transmembrane segment spans residues 321–342; that stretch reads LWGFTIFGWGLPAVFVAVWVGV. Over 343–361 the chain is Extracellular; the sequence is RATLANTGCWDLSSGHKKW. The chain crosses the membrane as a helical span at residues 362–382; the sequence is IIQVPILASVVLNFILFINII. At 383 to 409 the chain is on the cytoplasmic side; that stretch reads RVLATKLRETNAGRCDTRQQYRKLLRS. Residues 410 to 428 traverse the membrane as a helical segment; it reads TLVLVPLFGVHYTVFMALP. Over 429-440 the chain is Extracellular; that stretch reads YTEVSGTLWQIQ. The chain crosses the membrane as a helical span at residues 441–463; the sequence is MHYEMLFNSFQGFFVAIIYCFCN. Residues 464–591 are Cytoplasmic-facing; the sequence is GEVQAEIRKS…LLQEEWETVM (128 aa). The Important for interaction with G proteins signature appears at 474–477; the sequence is WSRW.

The protein belongs to the G-protein coupled receptor 2 family. In terms of assembly, homodimer in the absence of bound ligand. Peptide hormone binding leads to dissociation of the homodimer. Post-translationally, N-glycosylated. As to expression, detected in kidney.

It is found in the cell membrane. In terms of biological role, G-protein-coupled receptor for parathyroid hormone (PTH) and for parathyroid hormone-related peptide (PTHLH). Ligand binding causes a conformation change that triggers signaling via guanine nucleotide-binding proteins (G proteins) and modulates the activity of downstream effectors, such as adenylate cyclase (cAMP). PTH1R is coupled to G(s) G alpha proteins and mediates activation of adenylate cyclase activity. PTHLH dissociates from PTH1R more rapidly than PTH; as consequence, the cAMP response induced by PTHLH decays faster than the response induced by PTH. The sequence is that of Parathyroid hormone/parathyroid hormone-related peptide receptor (Pth1r) from Mus musculus (Mouse).